We begin with the raw amino-acid sequence, 91 residues long: Elongation factor 1-beta (91 aa).

It belongs to the EF-1-beta/EF-1-delta family.

In terms of biological role, promotes the exchange of GDP for GTP in EF-1-alpha/GDP, thus allowing the regeneration of EF-1-alpha/GTP that could then be used to form the ternary complex EF-1-alpha/GTP/AAtRNA. In Pyrococcus furiosus (strain ATCC 43587 / DSM 3638 / JCM 8422 / Vc1), this protein is Elongation factor 1-beta.